The following is a 473-amino-acid chain: Sulfate adenylyltransferase subunit 1 (473 aa).

One can recognise a tr-type G domain in the interval 19–238; that stretch reads KTLLKFLTCG…IKIKNSISSE (220 aa). Residues 28 to 35 are G1; the sequence is GSVDDGKS. Residue 28-35 participates in GTP binding; the sequence is GSVDDGKS. A G2 region spans residues 86-90; the sequence is GITID. The interval 107 to 110 is G3; sequence DTPG. GTP is bound by residues 107–111 and 162–165; these read DTPGH and NKMD. The segment at 162 to 165 is G4; that stretch reads NKMD. A G5 region spans residues 200–202; sequence SAL.

The protein belongs to the TRAFAC class translation factor GTPase superfamily. Classic translation factor GTPase family. CysN/NodQ subfamily. As to quaternary structure, heterodimer composed of CysD, the smaller subunit, and CysN.

The enzyme catalyses sulfate + ATP + H(+) = adenosine 5'-phosphosulfate + diphosphate. It participates in sulfur metabolism; hydrogen sulfide biosynthesis; sulfite from sulfate: step 1/3. With CysD forms the ATP sulfurylase (ATPS) that catalyzes the adenylation of sulfate producing adenosine 5'-phosphosulfate (APS) and diphosphate, the first enzymatic step in sulfur assimilation pathway. APS synthesis involves the formation of a high-energy phosphoric-sulfuric acid anhydride bond driven by GTP hydrolysis by CysN coupled to ATP hydrolysis by CysD. The chain is Sulfate adenylyltransferase subunit 1 from Buchnera aphidicola subsp. Acyrthosiphon pisum (strain APS) (Acyrthosiphon pisum symbiotic bacterium).